Reading from the N-terminus, the 351-residue chain is 3-dehydroquinate synthase (351 aa).

Residues 126–127 (TT), K138, and K147 each bind NAD(+). Zn(2+) is bound by residues E180, H244, and H260.

Belongs to the sugar phosphate cyclases superfamily. Dehydroquinate synthase family. The cofactor is Co(2+). Requires Zn(2+) as cofactor. It depends on NAD(+) as a cofactor.

The protein resides in the cytoplasm. It carries out the reaction 7-phospho-2-dehydro-3-deoxy-D-arabino-heptonate = 3-dehydroquinate + phosphate. It participates in metabolic intermediate biosynthesis; chorismate biosynthesis; chorismate from D-erythrose 4-phosphate and phosphoenolpyruvate: step 2/7. In terms of biological role, catalyzes the conversion of 3-deoxy-D-arabino-heptulosonate 7-phosphate (DAHP) to dehydroquinate (DHQ). The chain is 3-dehydroquinate synthase from Exiguobacterium sp. (strain ATCC BAA-1283 / AT1b).